The sequence spans 484 residues: Alkaline nuclease (484 aa).

It belongs to the herpesviridae alkaline nuclease family. Interacts with major DNA-binding protein; this interaction increases the nuclease processivity of the alkaline exonuclease.

The protein resides in the host nucleus. Its subcellular location is the host cytoplasm. Functionally, plays a role in processing non linear or branched viral DNA intermediates in order to promote the production of mature packaged unit-length linear progeny viral DNA molecules. Exhibits endonuclease and exonuclease activities and accepts both double-stranded and single-stranded DNA as substrate. Exonuclease digestion of DNA is in the 5'-&gt; 3' direction and the products are 5'-monophosphate nucleosides. Additionally, forms a recombinase with the major DNA-binding protein, which displays strand exchange activity. The polypeptide is Alkaline nuclease (Elephas maximus (Indian elephant)).